The sequence spans 247 residues: Carboxy-S-adenosyl-L-methionine synthase (247 aa).

Residues Tyr40, 65 to 67, 90 to 91, 122 to 123, Asn137, and Arg204 contribute to the S-adenosyl-L-methionine site; these read GSS, DN, and DI.

Belongs to the class I-like SAM-binding methyltransferase superfamily. Cx-SAM synthase family. Homodimer.

The enzyme catalyses prephenate + S-adenosyl-L-methionine = carboxy-S-adenosyl-L-methionine + 3-phenylpyruvate + H2O. In terms of biological role, catalyzes the conversion of S-adenosyl-L-methionine (SAM) to carboxy-S-adenosyl-L-methionine (Cx-SAM). The protein is Carboxy-S-adenosyl-L-methionine synthase of Pseudomonas syringae pv. syringae (strain B728a).